The sequence spans 284 residues: MLSKQIPLGIYEKALPAGECWLERLRLAKTLGFDFVEMSVDETDARLARLDWSREQRLALVSAVAETGVRVPSMCLSAHRRFPLGSEDDAIRAQGLEIMRKAIQFAQDVGIRVIQLAGYDVYYQQANDETRCRFRDGLKESVDMASRAQVTLAMEIMDYPLMNSISKALGYAHYLNNPWFQLYPDIGNLSAWDNDVQMELQAGIGHIVAVHVKDTKPGVFKNVPFGEGVVDFERCFETLKQSGYCGPYLIEMWSETAENPAAEVAKARDWVKARMASAGLVEAA.

It belongs to the L-ribulose-5-phosphate 3-epimerase family.

The catalysed reaction is L-ribulose 5-phosphate = L-xylulose 5-phosphate. It participates in cofactor degradation; L-ascorbate degradation; D-xylulose 5-phosphate from L-ascorbate: step 3/4. Functionally, catalyzes the isomerization of L-xylulose-5-phosphate to L-ribulose-5-phosphate. Is involved in the anaerobic L-ascorbate utilization. This Salmonella typhimurium (strain LT2 / SGSC1412 / ATCC 700720) protein is L-ribulose-5-phosphate 3-epimerase UlaE.